We begin with the raw amino-acid sequence, 29 residues long: NAD-reducing hydrogenase HoxS subunit delta (29 aa).

Residues 1-11 show a composition bias toward basic and acidic residues; sequence MKHSEKNEIAS. The tract at residues 1–29 is disordered; it reads MKHSEKNEIASHELPTTPLDPVLAAGRES.

It belongs to the [NiFe]/[NiFeSe] hydrogenase small subunit family. Tetramer of an alpha and a gamma subunits (flavin-containing dimer), and a delta and a nickel-containing beta subunits (hydrogenase dimer). [4Fe-4S] cluster serves as cofactor. Requires [3Fe-4S] cluster as cofactor. The cofactor is [2Fe-2S] cluster. It depends on FMN as a cofactor. Ni(2+) is required as a cofactor.

The protein localises to the cytoplasm. The catalysed reaction is H2 + NAD(+) = NADH + H(+). This is NAD-reducing hydrogenase HoxS subunit delta (hoxY) from Rhodococcus opacus (Nocardia opaca).